The primary structure comprises 491 residues: Glutamyl-tRNA(Gln) amidotransferase subunit A (491 aa).

Residues K77 and S152 each act as charge relay system in the active site. The active-site Acyl-ester intermediate is the S176.

The protein belongs to the amidase family. GatA subfamily. Heterotrimer of A, B and C subunits.

It catalyses the reaction L-glutamyl-tRNA(Gln) + L-glutamine + ATP + H2O = L-glutaminyl-tRNA(Gln) + L-glutamate + ADP + phosphate + H(+). Functionally, allows the formation of correctly charged Gln-tRNA(Gln) through the transamidation of misacylated Glu-tRNA(Gln) in organisms which lack glutaminyl-tRNA synthetase. The reaction takes place in the presence of glutamine and ATP through an activated gamma-phospho-Glu-tRNA(Gln). The protein is Glutamyl-tRNA(Gln) amidotransferase subunit A of Chlamydia abortus (strain DSM 27085 / S26/3) (Chlamydophila abortus).